The chain runs to 129 residues: Cytochrome c oxidase subunit 5B, mitochondrial (129 aa).

The N-terminal 31 residues, 1–31 (MASRLLRGAGALAAQTLRARGPNGVAVVRSM), are a transit peptide targeting the mitochondrion. N6-acetyllysine is present on residues Lys68 and Lys86. Positions 91, 93, 113, and 116 each coordinate Zn(2+). Residue Lys121 is modified to N6-acetyllysine.

Belongs to the cytochrome c oxidase subunit 5B family. As to quaternary structure, component of the cytochrome c oxidase (complex IV, CIV), a multisubunit enzyme composed of 14 subunits. The complex is composed of a catalytic core of 3 subunits MT-CO1, MT-CO2 and MT-CO3, encoded in the mitochondrial DNA, and 11 supernumerary subunits COX4I, COX5A, COX5B, COX6A, COX6B, COX6C, COX7A, COX7B, COX7C, COX8 and NDUFA4, which are encoded in the nuclear genome. The complex exists as a monomer or a dimer and forms supercomplexes (SCs) in the inner mitochondrial membrane with NADH-ubiquinone oxidoreductase (complex I, CI) and ubiquinol-cytochrome c oxidoreductase (cytochrome b-c1 complex, complex III, CIII), resulting in different assemblies (supercomplex SCI(1)III(2)IV(1) and megacomplex MCI(2)III(2)IV(2)).

It localises to the mitochondrion inner membrane. The protein operates within energy metabolism; oxidative phosphorylation. In terms of biological role, component of the cytochrome c oxidase, the last enzyme in the mitochondrial electron transport chain which drives oxidative phosphorylation. The respiratory chain contains 3 multisubunit complexes succinate dehydrogenase (complex II, CII), ubiquinol-cytochrome c oxidoreductase (cytochrome b-c1 complex, complex III, CIII) and cytochrome c oxidase (complex IV, CIV), that cooperate to transfer electrons derived from NADH and succinate to molecular oxygen, creating an electrochemical gradient over the inner membrane that drives transmembrane transport and the ATP synthase. Cytochrome c oxidase is the component of the respiratory chain that catalyzes the reduction of oxygen to water. Electrons originating from reduced cytochrome c in the intermembrane space (IMS) are transferred via the dinuclear copper A center (CU(A)) of subunit 2 and heme A of subunit 1 to the active site in subunit 1, a binuclear center (BNC) formed by heme A3 and copper B (CU(B)). The BNC reduces molecular oxygen to 2 water molecules using 4 electrons from cytochrome c in the IMS and 4 protons from the mitochondrial matrix. This is Cytochrome c oxidase subunit 5B, mitochondrial (COX5B) from Sus scrofa (Pig).